The following is a 105-amino-acid chain: Flagellar transcriptional regulator FlhD (105 aa).

This sequence belongs to the FlhD family. In terms of assembly, homodimer; disulfide-linked. Forms a heterohexamer composed of two FlhC and four FlhD subunits. Each FlhC binds a FlhD dimer, forming a heterotrimer, and a hexamer assembles by dimerization of two heterotrimers.

The protein resides in the cytoplasm. Functions in complex with FlhC as a master transcriptional regulator that regulates transcription of several flagellar and non-flagellar operons by binding to their promoter region. Activates expression of class 2 flagellar genes, including fliA, which is a flagellum-specific sigma factor that turns on the class 3 genes. Also regulates genes whose products function in a variety of physiological pathways. This is Flagellar transcriptional regulator FlhD from Cupriavidus pinatubonensis (strain JMP 134 / LMG 1197) (Cupriavidus necator (strain JMP 134)).